A 115-amino-acid chain; its full sequence is Large ribosomal subunit protein uL24 (115 aa).

The protein belongs to the universal ribosomal protein uL24 family. In terms of assembly, part of the 50S ribosomal subunit.

One of two assembly initiator proteins, it binds directly to the 5'-end of the 23S rRNA, where it nucleates assembly of the 50S subunit. In terms of biological role, one of the proteins that surrounds the polypeptide exit tunnel on the outside of the subunit. The chain is Large ribosomal subunit protein uL24 from Synechocystis sp. (strain ATCC 27184 / PCC 6803 / Kazusa).